The primary structure comprises 229 residues: Ribonuclease 3 (229 aa).

The 123-residue stretch at 5–127 folds into the RNase III domain; that stretch reads LNRLERKLGH…LIGAIYLDAG (123 aa). Glu40 serves as a coordination point for Mg(2+). Residue Asp44 is part of the active site. The Mg(2+) site is built by Asp113 and Glu116. The active site involves Glu116. In terms of domain architecture, DRBM spans 154–224; it reads DPKTRLQEFL…AAAALVALGV (71 aa).

The protein belongs to the ribonuclease III family. In terms of assembly, homodimer. Mg(2+) is required as a cofactor.

It localises to the cytoplasm. It carries out the reaction Endonucleolytic cleavage to 5'-phosphomonoester.. In terms of biological role, digests double-stranded RNA. Involved in the processing of primary rRNA transcript to yield the immediate precursors to the large and small rRNAs (23S and 16S). Processes some mRNAs, and tRNAs when they are encoded in the rRNA operon. Processes pre-crRNA and tracrRNA of type II CRISPR loci if present in the organism. In Azotobacter vinelandii (strain DJ / ATCC BAA-1303), this protein is Ribonuclease 3.